An 809-amino-acid polypeptide reads, in one-letter code: Leucine--tRNA ligase (809 aa).

The short motif at Pro40–His50 is the 'HIGH' region element. The short motif at Lys579 to Ser583 is the 'KMSKS' region element. Residue Lys582 participates in ATP binding.

Belongs to the class-I aminoacyl-tRNA synthetase family.

The protein resides in the cytoplasm. It carries out the reaction tRNA(Leu) + L-leucine + ATP = L-leucyl-tRNA(Leu) + AMP + diphosphate. The chain is Leucine--tRNA ligase from Campylobacter jejuni (strain RM1221).